The primary structure comprises 309 residues: tRNA dimethylallyltransferase (309 aa).

Residue 15 to 22 coordinates ATP; it reads GPTASGKS. 17–22 provides a ligand contact to substrate; sequence TASGKS. The interval 40–43 is interaction with substrate tRNA; that stretch reads DSRQ.

The protein belongs to the IPP transferase family. As to quaternary structure, monomer. The cofactor is Mg(2+).

It catalyses the reaction adenosine(37) in tRNA + dimethylallyl diphosphate = N(6)-dimethylallyladenosine(37) in tRNA + diphosphate. Functionally, catalyzes the transfer of a dimethylallyl group onto the adenine at position 37 in tRNAs that read codons beginning with uridine, leading to the formation of N6-(dimethylallyl)adenosine (i(6)A). The chain is tRNA dimethylallyltransferase from Chlorobium phaeovibrioides (strain DSM 265 / 1930) (Prosthecochloris vibrioformis (strain DSM 265)).